Reading from the N-terminus, the 188-residue chain is Dual specificity protein phosphatase 18 (188 aa).

A Tyrosine-protein phosphatase domain is found at 19-160 (GLSQITKSLF…LIHYELQLFG (142 aa)). The tract at residues 95 to 141 (MQKGRTLLHCAAGVSRSAALCLAYLMKYHAMSLVDAHTWTKSCRPII) is sufficient for mitochondrial localization. Cys-104 acts as the Phosphocysteine intermediate in catalysis.

The protein belongs to the protein-tyrosine phosphatase family. Non-receptor class dual specificity subfamily.

The protein localises to the cytoplasm. It is found in the nucleus. It localises to the mitochondrion inner membrane. The enzyme catalyses O-phospho-L-tyrosyl-[protein] + H2O = L-tyrosyl-[protein] + phosphate. It carries out the reaction O-phospho-L-seryl-[protein] + H2O = L-seryl-[protein] + phosphate. It catalyses the reaction O-phospho-L-threonyl-[protein] + H2O = L-threonyl-[protein] + phosphate. Functionally, can dephosphorylate single and diphosphorylated synthetic MAPK peptides, with preference for the phosphotyrosine and diphosphorylated forms over phosphothreonine. In vitro, dephosphorylates p-nitrophenyl phosphate (pNPP). The polypeptide is Dual specificity protein phosphatase 18 (Dusp18) (Mus musculus (Mouse)).